Reading from the N-terminus, the 477-residue chain is Chromosomal replication initiator protein DnaA (477 aa).

The domain I, interacts with DnaA modulators stretch occupies residues Met1 to Val87. A domain II region spans residues Val87–Ser132. Positions Pro112 to Asp131 are disordered. A domain III, AAA+ region region spans residues Arg133–Ala349. Positions 177, 179, 180, and 181 each coordinate ATP. A domain IV, binds dsDNA region spans residues Ser350–Met477.

It belongs to the DnaA family. As to quaternary structure, oligomerizes as a right-handed, spiral filament on DNA at oriC.

The protein resides in the cytoplasm. Functionally, plays an essential role in the initiation and regulation of chromosomal replication. ATP-DnaA binds to the origin of replication (oriC) to initiate formation of the DNA replication initiation complex once per cell cycle. Binds the DnaA box (a 9 base pair repeat at the origin) and separates the double-stranded (ds)DNA. Forms a right-handed helical filament on oriC DNA; dsDNA binds to the exterior of the filament while single-stranded (ss)DNA is stabiized in the filament's interior. The ATP-DnaA-oriC complex binds and stabilizes one strand of the AT-rich DNA unwinding element (DUE), permitting loading of DNA polymerase. After initiation quickly degrades to an ADP-DnaA complex that is not apt for DNA replication. Binds acidic phospholipids. This Clavibacter michiganensis subsp. michiganensis (strain NCPPB 382) protein is Chromosomal replication initiator protein DnaA.